A 240-amino-acid chain; its full sequence is Ribosomal RNA small subunit methyltransferase G (240 aa).

Residues G79, F84, 130 to 131 (AE), and R149 each bind S-adenosyl-L-methionine.

It belongs to the methyltransferase superfamily. RNA methyltransferase RsmG family.

The protein resides in the cytoplasm. Its function is as follows. Specifically methylates the N7 position of a guanine in 16S rRNA. This chain is Ribosomal RNA small subunit methyltransferase G, found in Lactobacillus acidophilus (strain ATCC 700396 / NCK56 / N2 / NCFM).